We begin with the raw amino-acid sequence, 188 residues long: Phosphoheptose isomerase (188 aa).

The SIS domain maps to 33–188 (VTASLRAGGK…CGLVEDALCS (156 aa)). 48–50 (NGG) provides a ligand contact to substrate. Zn(2+) contacts are provided by His57 and Glu61. Substrate is bound by residues Glu61, 90–91 (ND), 116–118 (STS), Ser121, and Gln168. 2 residues coordinate Zn(2+): Gln168 and His176.

The protein belongs to the SIS family. GmhA subfamily. In terms of assembly, homotetramer. The cofactor is Zn(2+).

It localises to the cytoplasm. The enzyme catalyses 2 D-sedoheptulose 7-phosphate = D-glycero-alpha-D-manno-heptose 7-phosphate + D-glycero-beta-D-manno-heptose 7-phosphate. The protein operates within carbohydrate biosynthesis; D-glycero-D-manno-heptose 7-phosphate biosynthesis; D-glycero-alpha-D-manno-heptose 7-phosphate and D-glycero-beta-D-manno-heptose 7-phosphate from sedoheptulose 7-phosphate: step 1/1. In terms of biological role, catalyzes the isomerization of sedoheptulose 7-phosphate in D-glycero-D-manno-heptose 7-phosphate. In Rhodospirillum rubrum (strain ATCC 11170 / ATH 1.1.1 / DSM 467 / LMG 4362 / NCIMB 8255 / S1), this protein is Phosphoheptose isomerase.